The chain runs to 335 residues: Matrix protein (335 aa).

It belongs to the morbillivirus/respirovirus/rubulavirus M protein family.

The protein resides in the virion. In terms of biological role, the M protein has a crucial role in virus assembly and interacts with the RNP complex as well as with the viral membrane. The sequence is that of Matrix protein (M) from Ailuropoda melanoleuca (Giant panda).